The sequence spans 214 residues: Riboflavin kinase (214 aa).

Residues 1-91 (MRSIMEVETL…YCSIFEDGGA (91 aa)) form an H-T-H motif-like region. Positions 92–214 (PVMRGKVVTG…DGDEVEVTLE (123 aa)) are riboflavin kinase. 101-106 (GLGEGQ) serves as a coordination point for CDP. Residues threonine 130 and asparagine 132 each contribute to the Mg(2+) site. Residues threonine 182 and glutamate 190 each contribute to the FMN site. 195-198 (IKLR) contacts CDP.

Belongs to the archaeal riboflavin kinase family. Mg(2+) is required as a cofactor.

The catalysed reaction is riboflavin + CTP = CDP + FMN + H(+). It participates in cofactor biosynthesis; FMN biosynthesis; FMN from riboflavin (CTP route): step 1/1. Its function is as follows. Catalyzes the CTP-dependent phosphorylation of riboflavin (vitamin B2) to form flavin mononucleotide (FMN). This chain is Riboflavin kinase (ribK), found in Methanocella arvoryzae (strain DSM 22066 / NBRC 105507 / MRE50).